Here is a 252-residue protein sequence, read N- to C-terminus: MNKVVVKNVTFGEGAPKICVPMVGKTVAALKEEAEMLQTIDLDVVEWRVDFFEDVKDLAKVEAALDEIRTILPETPILFTFRSAKEGGELAVSDEFYFELNETLARTGKVDLVDVELFNEEADVLRLIETAHKNNVKVVMSNHDFDKTPAKEEIVSRLIRMEALGADLPKIAVMPKSAGDVLTLLDATNTVSEKANQPIITMSMAGTGVISRLAGEVFGSAMTFGAAKKASAPGQIDVNELRHVLDLLHKQF.

3-dehydroquinate contacts are provided by residues 46–48 and Arg-82; that span reads EWR. Catalysis depends on His-143, which acts as the Proton donor/acceptor. Residue Lys-170 is the Schiff-base intermediate with substrate of the active site. 3-dehydroquinate contacts are provided by Arg-212, Ser-231, and Gln-235.

The protein belongs to the type-I 3-dehydroquinase family. Homodimer.

The catalysed reaction is 3-dehydroquinate = 3-dehydroshikimate + H2O. It functions in the pathway metabolic intermediate biosynthesis; chorismate biosynthesis; chorismate from D-erythrose 4-phosphate and phosphoenolpyruvate: step 3/7. Functionally, involved in the third step of the chorismate pathway, which leads to the biosynthesis of aromatic amino acids. Catalyzes the cis-dehydration of 3-dehydroquinate (DHQ) and introduces the first double bond of the aromatic ring to yield 3-dehydroshikimate. The chain is 3-dehydroquinate dehydratase from Listeria monocytogenes serotype 4a (strain HCC23).